We begin with the raw amino-acid sequence, 163 residues long: Nucleotide-binding protein CGSHiGG_08790 (163 aa).

Belongs to the YajQ family.

Its function is as follows. Nucleotide-binding protein. This chain is Nucleotide-binding protein CGSHiGG_08790, found in Haemophilus influenzae (strain PittGG).